We begin with the raw amino-acid sequence, 370 residues long: DNA polymerase IV (370 aa).

Residues 14–198 (IIHIDMDAFF…LPIEKFYGVG (185 aa)) enclose the UmuC domain. D18 and D116 together coordinate Mg(2+). Residue E117 is part of the active site.

It belongs to the DNA polymerase type-Y family. In terms of assembly, monomer. Mg(2+) is required as a cofactor.

It localises to the cytoplasm. It carries out the reaction DNA(n) + a 2'-deoxyribonucleoside 5'-triphosphate = DNA(n+1) + diphosphate. Poorly processive, error-prone DNA polymerase involved in untargeted mutagenesis. Copies undamaged DNA at stalled replication forks, which arise in vivo from mismatched or misaligned primer ends. These misaligned primers can be extended by PolIV. Exhibits no 3'-5' exonuclease (proofreading) activity. May be involved in translesional synthesis, in conjunction with the beta clamp from PolIII. The chain is DNA polymerase IV from Streptococcus mutans serotype c (strain ATCC 700610 / UA159).